Here is a 372-residue protein sequence, read N- to C-terminus: Homoserine O-acetyltransferase (372 aa).

In terms of domain architecture, AB hydrolase-1 spans 43–353 (NAILIFHALT…DKGHDSFLLK (311 aa)). The active-site Nucleophile is Ser148. Position 218 (Arg218) interacts with substrate. Residues Asp314 and His347 contribute to the active site. Asp348 contacts substrate.

It belongs to the AB hydrolase superfamily. MetX family. As to quaternary structure, homodimer.

The protein localises to the cytoplasm. It catalyses the reaction L-homoserine + acetyl-CoA = O-acetyl-L-homoserine + CoA. Its pathway is amino-acid biosynthesis; L-methionine biosynthesis via de novo pathway; O-acetyl-L-homoserine from L-homoserine: step 1/1. Its function is as follows. Transfers an acetyl group from acetyl-CoA to L-homoserine, forming acetyl-L-homoserine. In Pelagibacter ubique (strain HTCC1062), this protein is Homoserine O-acetyltransferase.